Reading from the N-terminus, the 217-residue chain is MYTGQSDHRPEGVGVNPGSPNVMEPGGGVANGAAVTPEGHYSHAPSSALQAVKKNINHMSGLSLGLRVSEFVLSVIAFSLMASAEQNGAVYSTFTSYSFVLAINVLVALYAIGQIILSVMPLVSGSAPKKLYLFITFGCDQLSAFLLMAAGAAGASVAMLINRKGVIDDYGSGCIDGKITVFCAHAEASIAFTFLSFFCVMISSYLGVYNLAPYLIL.

The span at 1 to 11 (MYTGQSDHRPE) shows a compositional bias: basic and acidic residues. The interval 1-21 (MYTGQSDHRPEGVGVNPGSPN) is disordered. Topologically, residues 1-61 (MYTGQSDHRP…VKKNINHMSG (61 aa)) are cytoplasmic. The chain crosses the membrane as a helical span at residues 62 to 82 (LSLGLRVSEFVLSVIAFSLMA). Residues 83–98 (SAEQNGAVYSTFTSYS) are Extracellular-facing. A helical transmembrane segment spans residues 99 to 119 (FVLAINVLVALYAIGQIILSV). Residues 120–141 (MPLVSGSAPKKLYLFITFGCDQ) lie on the Cytoplasmic side of the membrane. The helical transmembrane segment at 142–162 (LSAFLLMAAGAAGASVAMLIN) threads the bilayer. The Extracellular segment spans residues 163 to 187 (RKGVIDDYGSGCIDGKITVFCAHAE). Residues 188-208 (ASIAFTFLSFFCVMISSYLGV) form a helical membrane-spanning segment. Over 209–217 (YNLAPYLIL) the chain is Cytoplasmic.

The protein belongs to the Casparian strip membrane proteins (CASP) family. Homodimer and heterodimers.

The protein resides in the cell membrane. This chain is CASP-like protein UU4, found in Physcomitrium patens (Spreading-leaved earth moss).